Reading from the N-terminus, the 1101-residue chain is Serine/threonine-protein kinase PSK2 (1101 aa).

Threonine 118 carries the phosphothreonine modification. A Protein kinase domain is found at 841–1099 (FTILQVMGEG…IDEIYEDKWL (259 aa)). ATP is bound by residues 847–855 (MGEGAYGKV) and lysine 870. The active-site Proton acceptor is the aspartate 975.

The protein belongs to the protein kinase superfamily. Ser/Thr protein kinase family.

It is found in the cytoplasm. The catalysed reaction is L-seryl-[protein] + ATP = O-phospho-L-seryl-[protein] + ADP + H(+). It carries out the reaction L-threonyl-[protein] + ATP = O-phospho-L-threonyl-[protein] + ADP + H(+). In terms of biological role, serine/threonine-protein kinase involved in the control of sugar metabolism and translation. Phosphorylates UGP1, which is required for normal glycogen and beta-(1,6)-glucan synthesis. This phosphorylation shifts glucose partitioning toward cell wall glucan synthesis at the expense of glycogen synthesis. Also phosphorylates the glycogen synthase GSY2 and the translation factors CAF20, TIF11 and SRO9. The protein is Serine/threonine-protein kinase PSK2 (PSK2) of Saccharomyces cerevisiae (strain ATCC 204508 / S288c) (Baker's yeast).